The primary structure comprises 642 residues: Chaperone protein DnaK (642 aa).

At T200 the chain carries Phosphothreonine; by autocatalysis. A compositionally biased stretch (low complexity) spans 608–618 (QAESQAAGEGQ). The disordered stretch occupies residues 608–642 (QAESQAAGEGQPDAGKKDDGNVVDAEFEEVKKDKQ).

Belongs to the heat shock protein 70 family.

Its function is as follows. Acts as a chaperone. The chain is Chaperone protein DnaK from Laribacter hongkongensis (strain HLHK9).